Consider the following 494-residue polypeptide: ATP synthase subunit beta, chloroplastic (494 aa).

172 to 179 (GGAGVGKT) contacts ATP.

The protein belongs to the ATPase alpha/beta chains family. F-type ATPases have 2 components, CF(1) - the catalytic core - and CF(0) - the membrane proton channel. CF(1) has five subunits: alpha(3), beta(3), gamma(1), delta(1), epsilon(1). CF(0) has four main subunits: a(1), b(1), b'(1) and c(9-12).

It is found in the plastid. The protein resides in the chloroplast thylakoid membrane. It catalyses the reaction ATP + H2O + 4 H(+)(in) = ADP + phosphate + 5 H(+)(out). In terms of biological role, produces ATP from ADP in the presence of a proton gradient across the membrane. The catalytic sites are hosted primarily by the beta subunits. This Physcomitrium patens (Spreading-leaved earth moss) protein is ATP synthase subunit beta, chloroplastic.